The primary structure comprises 152 residues: UPF0225 protein YchJ (152 aa).

It belongs to the UPF0225 family.

This Salmonella typhimurium (strain LT2 / SGSC1412 / ATCC 700720) protein is UPF0225 protein YchJ (ychJ).